The sequence spans 193 residues: Ion-translocating oxidoreductase complex subunit A (193 aa).

Transmembrane regions (helical) follow at residues 4 to 24, 39 to 59, 71 to 91, 102 to 122, 134 to 154, and 167 to 187; these read FFFI…KFLG, IGMG…SWMV, FLRI…IEVV, ALGI…VALL, LLYG…FAGM, and FAGA…FMGF.

Belongs to the NqrDE/RnfAE family. The complex is composed of six subunits: RnfA, RnfB, RnfC, RnfD, RnfE and RnfG.

The protein localises to the cellular chromatophore membrane. Functionally, part of a membrane-bound complex that couples electron transfer with translocation of ions across the membrane. This is Ion-translocating oxidoreductase complex subunit A from Cereibacter sphaeroides (strain ATCC 17029 / ATH 2.4.9) (Rhodobacter sphaeroides).